Reading from the N-terminus, the 87-residue chain is Toxin RelG (87 aa).

The protein belongs to the RelE toxin family. As to quaternary structure, interacts with cognate antitoxin RelF, which neutralizes the toxin. Also interacts with non-cognate antitoxin RelB in vitro, in M.smegmatis this neutralizes the toxicity of this toxin.

In terms of biological role, toxic component of a type II toxin-antitoxin (TA) system. Has RNase activity and preferentially cleaves at the 3'-end of purine ribonucleotides. Overexpression in M.tuberculosis or M.smegmatis inhibits colony formation in a bacteriostatic rather than bacteriocidal fashion. Its toxic effect is neutralized by coexpression with cognate antitoxin RelB2 (shown only for M.smegmatis). Overexpression also increases the number of gentamicin-tolerant and levofloxacin-tolerant persister cells. Functionally, in combination with cognate antitoxin RelF represses its own promoter. Has been seen to bind DNA in complex with antitoxin RelF but not alone. The protein is Toxin RelG (relG) of Mycobacterium tuberculosis (strain ATCC 25618 / H37Rv).